Consider the following 343-residue polypeptide: Tetraacyldisaccharide 4'-kinase (343 aa).

65–72 is a binding site for ATP; that stretch reads HAGGTGKT.

The protein belongs to the LpxK family.

The catalysed reaction is a lipid A disaccharide + ATP = a lipid IVA + ADP + H(+). Its pathway is glycolipid biosynthesis; lipid IV(A) biosynthesis; lipid IV(A) from (3R)-3-hydroxytetradecanoyl-[acyl-carrier-protein] and UDP-N-acetyl-alpha-D-glucosamine: step 6/6. Transfers the gamma-phosphate of ATP to the 4'-position of a tetraacyldisaccharide 1-phosphate intermediate (termed DS-1-P) to form tetraacyldisaccharide 1,4'-bis-phosphate (lipid IVA). The chain is Tetraacyldisaccharide 4'-kinase from Neisseria gonorrhoeae (strain ATCC 700825 / FA 1090).